A 308-amino-acid chain; its full sequence is Taste receptor type 2 member 107 (308 aa).

Topologically, residues 1–7 are extracellular; that stretch reads MLNSAEG. The chain crosses the membrane as a helical span at residues 8-28; that stretch reads ILLCVVTSEAVLGVLGDTYIA. Residues 29-43 are Cytoplasmic-facing; that stretch reads LFNCMDYAKNKKLSK. A helical membrane pass occupies residues 44 to 64; it reads IGFILIGLAISRIGVVWIIIL. Over 65–87 the chain is Extracellular; sequence QGYIQVFFPHMLTSGNITEYITY. Asn80 carries an N-linked (GlcNAc...) asparagine glycan. Residues 88-108 traverse the membrane as a helical segment; it reads IWVFLNHLSVWFVTNLNILYF. Over 109–125 the chain is Cytoplasmic; that stretch reads LKIANFSNSVFLWLKRR. Residues 126 to 146 traverse the membrane as a helical segment; it reads VNAVFIFLSGCLLTSWLLCFP. Residues 147–180 lie on the Extracellular side of the membrane; the sequence is QMTKILQNSKMHQRNTSWVHQRKNYFLINQSVTN. Residues Asn161 and Asn175 are each glycosylated (N-linked (GlcNAc...) asparagine). Residues 181–201 traverse the membrane as a helical segment; it reads LGIFFFIIVSLITCFLLIVFL. Topologically, residues 202-232 are cytoplasmic; sequence WRHVRQMHSDVSGFRDHSTKVHVKAMKFLIS. A helical membrane pass occupies residues 233 to 253; that stretch reads FMVFFILHFVGLSIEVLCFIL. Over 254 to 258 the chain is Extracellular; it reads PQNKL. The helical transmembrane segment at 259-279 threads the bilayer; sequence LFITGLTATCLYPCGHSIIVI. Over 280 to 308 the chain is Cytoplasmic; the sequence is LGNKQLKQASLKALQQLKCCETKGNFRVK.

It belongs to the G-protein coupled receptor T2R family.

Its subcellular location is the membrane. Functionally, putative taste receptor which may play a role in the perception of bitterness. This chain is Taste receptor type 2 member 107, found in Mus musculus (Mouse).